The primary structure comprises 199 residues: Protein-L-isoaspartate O-methyltransferase (199 aa).

Ser-51 is an active-site residue.

This sequence belongs to the methyltransferase superfamily. L-isoaspartyl/D-aspartyl protein methyltransferase family.

Its subcellular location is the cytoplasm. The catalysed reaction is [protein]-L-isoaspartate + S-adenosyl-L-methionine = [protein]-L-isoaspartate alpha-methyl ester + S-adenosyl-L-homocysteine. Its function is as follows. Catalyzes the methyl esterification of L-isoaspartyl residues in peptides and proteins that result from spontaneous decomposition of normal L-aspartyl and L-asparaginyl residues. It plays a role in the repair and/or degradation of damaged proteins. The chain is Protein-L-isoaspartate O-methyltransferase from Fervidobacterium nodosum (strain ATCC 35602 / DSM 5306 / Rt17-B1).